The chain runs to 324 residues: Polyprenol dehydrogenase (324 aa).

Tyr-206 serves as the catalytic Proton acceptor. 3 residues coordinate NAD(+): Tyr-206, Lys-210, and Thr-243.

Belongs to the short-chain dehydrogenases/reductases (SDR) family.

It localises to the lipid droplet. It carries out the reaction a di-trans,poly-cis-polyprenol + NAD(+) = a di-trans,poly-cis-polyprenal + NADH + H(+). It catalyses the reaction a di-trans,poly-cis-polyprenol + NADP(+) = a di-trans,poly-cis-polyprenal + NADPH + H(+). The enzyme catalyses a di-trans,poly-cis-dolichol + NADP(+) = a di-trans,poly-cis-dolichal + NADPH + H(+). The catalysed reaction is a di-trans,poly-cis-dolichol + NAD(+) = a di-trans,poly-cis-dolichal + NADH + H(+). Its pathway is protein modification; protein glycosylation. Its function is as follows. Oxidoreductase that plays a key role in early steps of protein N-linked glycosylation by mediating two non-consecutive steps in dolichol biosynthesis. Acts both as a NAD(+)-dependent dehydrogenase and as a NADPH-dependent reductase during the conversion of polyprenol into dolichol. First catalyzes the NAD(+)-dependent dehydrogenation of polyprenol into polyprenal; polyprenal is then reduced into dolichal by srd5a3. It then catalyzes the NADPH-dependent reduction of dolichal into dolichol. The sequence is that of Polyprenol dehydrogenase from Danio rerio (Zebrafish).